Consider the following 98-residue polypeptide: Acylphosphatase (98 aa).

Positions 12 to 98 (TYYVRVRGVV…EKRFERFQQQ (87 aa)) constitute an Acylphosphatase-like domain. Residues arginine 27 and asparagine 45 contribute to the active site.

Belongs to the acylphosphatase family.

It carries out the reaction an acyl phosphate + H2O = a carboxylate + phosphate + H(+). The protein is Acylphosphatase (acyP) of Burkholderia cenocepacia (strain HI2424).